Reading from the N-terminus, the 78-residue chain is UPF0335 protein RP113 (78 aa).

It belongs to the UPF0335 family.

The protein is UPF0335 protein RP113 of Rickettsia prowazekii (strain Madrid E).